A 294-amino-acid chain; its full sequence is PAK4-inhibitor INKA2 (294 aa).

Disordered regions lie at residues 50–143, 170–198, and 223–290; these read ISGG…STLM, PELE…RELG, and LKEK…DINT. Over residues 85–99 the composition is skewed to polar residues; sequence SPSNQASLGSTSSGK. Positions 134 to 177 are inka box; that stretch reads EPDDWTSTLMSRGRNRQPLVLGDNVFADLVGNWLDLPELEKGGE. Residues 171–198 show a composition bias toward basic and acidic residues; the sequence is ELEKGGEKGETGEAGEPKGGRGQPRELG. Residues 241–253 show a composition bias toward basic residues; the sequence is RSQKVKKRSHSKG.

The protein belongs to the INKA family. As to quaternary structure, interacts with PAK4.

The protein localises to the nucleus. Inhibitor of the serine/threonine-protein kinase PAK4. Acts by binding PAK4 in a substrate-like manner, inhibiting the protein kinase activity. This chain is PAK4-inhibitor INKA2, found in Bos taurus (Bovine).